The primary structure comprises 407 residues: Proteasome-activating nucleotidase (407 aa).

Residues 22 to 67 (KEKTQIAELESKVLRLELKNKDVTRENVQIKKENEILKRELDKLRI) adopt a coiled-coil conformation. Residues 192 to 197 (GTGKTL) and H331 contribute to the ATP site. The segment at 405 to 407 (MYG) is docks into pockets in the proteasome alpha-ring to cause gate opening.

The protein belongs to the AAA ATPase family. In terms of assembly, homohexamer. The hexameric complex has a two-ring architecture resembling a top hat that caps the 20S proteasome core at one or both ends. Upon ATP-binding, the C-terminus of PAN interacts with the alpha-rings of the proteasome core by binding to the intersubunit pockets.

It localises to the cytoplasm. Functionally, ATPase which is responsible for recognizing, binding, unfolding and translocation of substrate proteins into the archaeal 20S proteasome core particle. Is essential for opening the gate of the 20S proteasome via an interaction with its C-terminus, thereby allowing substrate entry and access to the site of proteolysis. Thus, the C-termini of the proteasomal ATPase function like a 'key in a lock' to induce gate opening and therefore regulate proteolysis. Unfolding activity requires energy from ATP hydrolysis, whereas ATP binding alone promotes ATPase-20S proteasome association which triggers gate opening, and supports translocation of unfolded substrates. The chain is Proteasome-activating nucleotidase from Methanococcus maripaludis (strain C7 / ATCC BAA-1331).